Here is a 1396-residue protein sequence, read N- to C-terminus: uncharacterized protein (1396 aa).

Residue 88–95 (AYKKWGRS) coordinates ATP. Disordered regions lie at residues 146–165 (EKIH…LSPT) and 198–388 (KPCS…VKDL). Over residues 198 to 221 (KPCSYSSSSSSSTVPPASTDTSSP) the composition is skewed to low complexity. Residues 242 to 268 (MHEKAQSRSRHEKESKLSSSTIEEKPA) are compositionally biased toward basic and acidic residues. Residues 286-300 (SWSSGSSEAGSSSSG) are compositionally biased toward low complexity. Positions 312–327 (VKVRHKAREIRNRKGR) are enriched in basic residues. Residues S817 and S1083 each carry the phosphoserine modification. The disordered stretch occupies residues 1113–1137 (PISASELSPGGGSESEFESEKDEAS). Phosphoserine is present on residues S1197 and S1339. The disordered stretch occupies residues 1347–1396 (TGERGSETKPNGLHRKMCSSASSDTGDTGSEAGGEWVGPSREELFSRTHL). Low complexity predominate over residues 1365–1376 (SSASSDTGDTGS). Over residues 1386–1396 (SREELFSRTHL) the composition is skewed to basic and acidic residues.

This is an uncharacterized protein from Mus musculus (Mouse).